A 161-amino-acid chain; its full sequence is Urease accessory protein UreE (161 aa).

Residues R138–G161 are disordered.

The protein belongs to the UreE family.

It is found in the cytoplasm. In terms of biological role, involved in urease metallocenter assembly. Binds nickel. Probably functions as a nickel donor during metallocenter assembly. The sequence is that of Urease accessory protein UreE from Agrobacterium fabrum (strain C58 / ATCC 33970) (Agrobacterium tumefaciens (strain C58)).